Consider the following 139-residue polypeptide: D-ribose pyranase (139 aa).

Residue histidine 20 is the Proton donor of the active site. Residues aspartate 28, histidine 106, and phenylalanine 128–asparagine 130 each bind substrate.

It belongs to the RbsD / FucU family. RbsD subfamily. As to quaternary structure, homodecamer.

It is found in the cytoplasm. The catalysed reaction is beta-D-ribopyranose = beta-D-ribofuranose. Its pathway is carbohydrate metabolism; D-ribose degradation; D-ribose 5-phosphate from beta-D-ribopyranose: step 1/2. Its function is as follows. Catalyzes the interconversion of beta-pyran and beta-furan forms of D-ribose. The sequence is that of D-ribose pyranase from Yersinia enterocolitica serotype O:8 / biotype 1B (strain NCTC 13174 / 8081).